The sequence spans 90 residues: Conotoxin ba9a (90 aa).

A signal peptide spans 1–27 (MHLSLARSAGLMWLLLFAVGNFVGVQP). A propeptide spanning residues 28-62 (GQITRDVDNGQLADNRRNLQSLRKPMTLFKSLNKR) is cleaved from the precursor. Glu-67 bears the 4-carboxyglutamate mark. 4-hydroxyproline is present on residues Pro-76 and Pro-80.

Expressed by the venom duct.

The protein localises to the secreted. The sequence is that of Conotoxin ba9a from Conus bayani (Bayan's cone).